Here is a 720-residue protein sequence, read N- to C-terminus: Polyribonucleotide nucleotidyltransferase (720 aa).

D487 and D493 together coordinate Mg(2+). The 60-residue stretch at 554–613 (PRIETFKIPTDKIREVIGTGGKVIREIVEKTGAKVNIEDDGTVKVASSDGEAMKAAIKWI) folds into the KH domain. Positions 623 to 691 (GQIYDGTVVK…DRGKTRLSMK (69 aa)) constitute an S1 motif domain. Positions 692 to 720 (AVDQTTGEDLEAKQKAEGGAEAPREAAGE) are disordered. Positions 701–720 (LEAKQKAEGGAEAPREAAGE) are enriched in basic and acidic residues.

It belongs to the polyribonucleotide nucleotidyltransferase family. It depends on Mg(2+) as a cofactor.

The protein localises to the cytoplasm. It catalyses the reaction RNA(n+1) + phosphate = RNA(n) + a ribonucleoside 5'-diphosphate. Functionally, involved in mRNA degradation. Catalyzes the phosphorolysis of single-stranded polyribonucleotides processively in the 3'- to 5'-direction. In Bradyrhizobium sp. (strain BTAi1 / ATCC BAA-1182), this protein is Polyribonucleotide nucleotidyltransferase.